The chain runs to 246 residues: NH(3)-dependent NAD(+) synthetase (246 aa).

Residue 29–36 (GLSGGIDS) participates in ATP binding. A Mg(2+)-binding site is contributed by Asp-35. Arg-110 lines the deamido-NAD(+) pocket. Residue Thr-130 coordinates ATP. Glu-135 is a Mg(2+) binding site. ATP contacts are provided by Lys-159 and Ser-181.

This sequence belongs to the NAD synthetase family. In terms of assembly, homodimer.

It catalyses the reaction deamido-NAD(+) + NH4(+) + ATP = AMP + diphosphate + NAD(+) + H(+). The protein operates within cofactor biosynthesis; NAD(+) biosynthesis; NAD(+) from deamido-NAD(+) (ammonia route): step 1/1. Functionally, catalyzes the ATP-dependent amidation of deamido-NAD to form NAD. Uses ammonia as a nitrogen source. In Campylobacter jejuni subsp. jejuni serotype O:23/36 (strain 81-176), this protein is NH(3)-dependent NAD(+) synthetase.